We begin with the raw amino-acid sequence, 1019 residues long: Clotting factor C (1019 aa).

The first 25 residues, 1 to 25 (MVLASFLVSGLVLGILAQQMRPVQS), serve as a signal peptide directing secretion. Residues 102–137 (YGTWCSGECQCKNGGICDQRTGACTCRDRYEGAHCE) form the EGF-like domain. 16 disulfides stabilise this stretch: Cys110/Cys118, Cys112/Cys125, Cys127/Cys136, Cys142/Cys182, Cys168/Cys195, Cys199/Cys241, Cys227/Cys254, Cys260/Cys308, Cys294/Cys321, Cys331/Cys350, Cys354/Cys374, Cys464/Cys564, Cys538/Cys556, Cys576/Cys621, Cys607/Cys634, and Cys720/Cys748. Sushi domains follow at residues 140-197 (KGCP…KCIR), 198-256 (ECAK…QCKK), and 258-323 (VFCP…SCVK). Positions 325–421 (ADREVDCDSK…EELKSLARSF (97 aa)) constitute an LCCL domain. One can recognise a C-type lectin domain in the interval 436 to 568 (CPDGWFEVEE…PSSFACMMDL (133 aa)). Residues Asn523 and Asn534 are each glycosylated (N-linked (GlcNAc...) asparagine). 2 Sushi domains span residues 574-636 (AKCD…RCIK) and 689-750 (PRSS…SCIP). N-linked (GlcNAc...) asparagine glycans are attached at residues Asn624, Asn740, and Asn767. The region spanning 763-1019 (IWNGNSTEIG…VFLSWIRQFI (257 aa)) is the Peptidase S1 domain. Residues Cys794 and Cys810 are joined by a disulfide bond. Catalysis depends on charge relay system residues His809 and Asp865. Asn912 carries an N-linked (GlcNAc...) asparagine glycan. Cys932 and Cys951 are joined by a disulfide. Position 960 (Asp960) interacts with substrate. Cys962 and Cys996 are disulfide-bonded. Ser966 acts as the Charge relay system in catalysis.

Belongs to the peptidase S1 family. As to quaternary structure, heterodimer of a light chain and a heavy chain linked by a disulfide bond. Forms a covalent heterodimer with intracellular coagulation inhibitor 1/LICI-1. Forms a covalent heterodimer with intracellular coagulation inhibitor 2/LICI-2. Post-translationally, N-glycosylated. Lipopolysaccharide (LPS) activates clotting factor C by inducing the proteolytic cleavage of the clotting factor C light chain into clotting factor C chains A and B. Clotting factor C chains heavy, A and B remain associated via interchain disulfide bonds. Expressed in hemocytes (at protein level).

The protein resides in the secreted. The enzyme catalyses Selective cleavage of 103-Arg-|-Ser-104 and 124-Ile-|-Ile-125 bonds in Limulus clotting factor B to form activated factor B. Cleavage of -Pro-Arg-|-Xaa- bonds in synthetic substrates.. Its activity is regulated as follows. Activated by Gram-negative bacterial lipopolysaccharides. Inhibited by intracellular coagulation inhibitor 1/LICI-1 and to a lesser extent by intracellular coagulation inhibitors 2/LICI-2 and 3/LICI-3. Inhibited by the small molecule diisopropyl fluorophosphate (DFP). Functionally, this enzyme is closely associated with an endotoxin-sensitive hemolymph coagulation system which may play important roles in both hemostasis and host defense mechanisms. Its active form catalyzes the activation of clotting factor B. The sequence is that of Clotting factor C from Tachypleus tridentatus (Japanese horseshoe crab).